Reading from the N-terminus, the 720-residue chain is Catalase-peroxidase (720 aa).

A cross-link (tryptophyl-tyrosyl-methioninium (Trp-Tyr) (with M-248)) is located at residues 94–222; sequence WHAAGTYRIA…LAAVTMGLIY (129 aa). The active-site Proton acceptor is histidine 95. The tryptophyl-tyrosyl-methioninium (Tyr-Met) (with W-94) cross-link spans 222 to 248; that stretch reads YVNPEGVDGNPDPLKTAHDVRVTFARM. Histidine 263 contacts heme b.

Belongs to the peroxidase family. Peroxidase/catalase subfamily. Homodimer. It depends on heme b as a cofactor. Post-translationally, formation of the three residue Trp-Tyr-Met cross-link is important for the catalase, but not the peroxidase activity of the enzyme.

It carries out the reaction H2O2 + AH2 = A + 2 H2O. The enzyme catalyses 2 H2O2 = O2 + 2 H2O. Its function is as follows. Bifunctional enzyme with both catalase and broad-spectrum peroxidase activity. In Synechococcus elongatus (strain ATCC 33912 / PCC 7942 / FACHB-805) (Anacystis nidulans R2), this protein is Catalase-peroxidase.